We begin with the raw amino-acid sequence, 243 residues long: ATP synthase subunit a (243 aa).

Helical transmembrane passes span 29 to 49, 54 to 74, 89 to 109, 114 to 134, 144 to 164, 182 to 202, and 208 to 228; these read NASL…YIGL, ILPN…VSTI, VFTI…PLGF, HIAV…AIGF, ILLP…IELF, IAGH…NIFL, and AFII…AYIF.

Belongs to the ATPase A chain family. In terms of assembly, F-type ATPases have 2 components, CF(1) - the catalytic core - and CF(0) - the membrane proton channel. CF(1) has five subunits: alpha(3), beta(3), gamma(1), delta(1), epsilon(1). CF(0) has three main subunits: a(1), b(2) and c(9-12). The alpha and beta chains form an alternating ring which encloses part of the gamma chain. CF(1) is attached to CF(0) by a central stalk formed by the gamma and epsilon chains, while a peripheral stalk is formed by the delta and b chains.

The protein resides in the cell inner membrane. In terms of biological role, key component of the proton channel; it plays a direct role in the translocation of protons across the membrane. The protein is ATP synthase subunit a of Ehrlichia chaffeensis (strain ATCC CRL-10679 / Arkansas).